Here is a 231-residue protein sequence, read N- to C-terminus: Lipoprotein-releasing system ATP-binding protein LolD (231 aa).

Positions 6–230 constitute an ABC transporter domain; sequence LSCKNVSKKY…DGELELVINS (225 aa). 42 to 49 contributes to the ATP binding site; the sequence is GLSGSGKT.

It belongs to the ABC transporter superfamily. Lipoprotein translocase (TC 3.A.1.125) family. As to quaternary structure, the complex is composed of two ATP-binding proteins (LolD) and two transmembrane proteins (LolC and LolE).

It is found in the cell inner membrane. In terms of biological role, part of the ABC transporter complex LolCDE involved in the translocation of mature outer membrane-directed lipoproteins, from the inner membrane to the periplasmic chaperone, LolA. Responsible for the formation of the LolA-lipoprotein complex in an ATP-dependent manner. This is Lipoprotein-releasing system ATP-binding protein LolD from Francisella tularensis subsp. tularensis (strain FSC 198).